The primary structure comprises 571 residues: Isocitrate dehydrogenase kinase/phosphatase 2 (571 aa).

Residues 313-319 (APGTPGM) and K334 contribute to the ATP site. D369 is an active-site residue.

It belongs to the AceK family.

It localises to the cytoplasm. It carries out the reaction L-seryl-[isocitrate dehydrogenase] + ATP = O-phospho-L-seryl-[isocitrate dehydrogenase] + ADP + H(+). In terms of biological role, bifunctional enzyme which can phosphorylate or dephosphorylate isocitrate dehydrogenase (IDH) on a specific serine residue. This is a regulatory mechanism which enables bacteria to bypass the Krebs cycle via the glyoxylate shunt in response to the source of carbon. When bacteria are grown on glucose, IDH is fully active and unphosphorylated, but when grown on acetate or ethanol, the activity of IDH declines drastically concomitant with its phosphorylation. This Pseudoalteromonas translucida (strain TAC 125) protein is Isocitrate dehydrogenase kinase/phosphatase 2.